We begin with the raw amino-acid sequence, 326 residues long: N-acetyl-gamma-glutamyl-phosphate reductase (326 aa).

C155 is an active-site residue.

It belongs to the NAGSA dehydrogenase family. Type 1 subfamily.

Its subcellular location is the cytoplasm. It carries out the reaction N-acetyl-L-glutamate 5-semialdehyde + phosphate + NADP(+) = N-acetyl-L-glutamyl 5-phosphate + NADPH + H(+). The protein operates within amino-acid biosynthesis; L-arginine biosynthesis; N(2)-acetyl-L-ornithine from L-glutamate: step 3/4. In terms of biological role, catalyzes the NADPH-dependent reduction of N-acetyl-5-glutamyl phosphate to yield N-acetyl-L-glutamate 5-semialdehyde. The protein is N-acetyl-gamma-glutamyl-phosphate reductase of Shewanella baltica (strain OS223).